Reading from the N-terminus, the 438-residue chain is MPENVTVIGAGLAGSEATWQLAKRGIHVDLYEMRPKKETPAHETGEFAELVCTNSMRSNQLSNAVGLLKEEMRHLDSLIMKAADMTQVPAGGALAVDRDSFSKYVTDTLKGMDNVTVHEEEIVKIPEDGITIIATGPLTSDALAKQIQAFSGTDSLHFFDAAAPIIAADSIDMDIVYKKSRYDRGEAAYLNCPMSKEQYEKFANELIKAETAQLHGFENSDVFEGCMPIEVMAARGAKTMLFGPLKPVGLEDPHTGETPYAVVQLRQDNAAASMYNIVGFQTHLKFGEQKRVFSMIPGLENARFVRYGKMHRNTYMASPNVLTASYEAKNRPGLFFAGQMTGVEGYVESAGSGLVAGINAAREALGKETVAFPKNTALGSMANYVTTTSAKHFQPMNASFALLPALEGKKIRKKRERHEKISERGLASLDAFKTEVLD.

9–14 contacts FAD; the sequence is GAGLAG.

Belongs to the MnmG family. TrmFO subfamily. FAD is required as a cofactor.

Its subcellular location is the cytoplasm. The catalysed reaction is uridine(54) in tRNA + (6R)-5,10-methylene-5,6,7,8-tetrahydrofolate + NADH + H(+) = 5-methyluridine(54) in tRNA + (6S)-5,6,7,8-tetrahydrofolate + NAD(+). It carries out the reaction uridine(54) in tRNA + (6R)-5,10-methylene-5,6,7,8-tetrahydrofolate + NADPH + H(+) = 5-methyluridine(54) in tRNA + (6S)-5,6,7,8-tetrahydrofolate + NADP(+). Functionally, catalyzes the folate-dependent formation of 5-methyl-uridine at position 54 (M-5-U54) in all tRNAs. The polypeptide is Methylenetetrahydrofolate--tRNA-(uracil-5-)-methyltransferase TrmFO (Lactobacillus acidophilus (strain ATCC 700396 / NCK56 / N2 / NCFM)).